The chain runs to 895 residues: Serine-rich coiled-coil domain-containing protein 1 (895 aa).

4 disordered regions span residues 1–142 (MGDS…KEPS), 154–177 (SGRS…KQST), 332–394 (ELHS…RTLG), and 459–497 (RSSS…SSKM). Low complexity predominate over residues 43-56 (SSSPSSTNSSSGST). Over residues 83–102 (TEQNLSISNGAQPSHSNMQK) the composition is skewed to polar residues. Over residues 131–142 (LTEDFEREKEPS) the composition is skewed to basic and acidic residues. Positions 348–358 (SLQSTELSVGN) are enriched in polar residues. Residues 675-705 (MLRLQLKDRDELISQLQAELEKVQHLQKAFA) are a coiled coil. Positions 731 to 753 (QGGRETTHRNRTMSQSHSTRDRK) are disordered.

It belongs to the CCSER family.

The polypeptide is Serine-rich coiled-coil domain-containing protein 1 (Ccser1) (Mus musculus (Mouse)).